We begin with the raw amino-acid sequence, 199 residues long: NAD(P)H dehydrogenase (quinone) (199 aa).

One can recognise a Flavodoxin-like domain in the interval Val-4–Val-190. FMN-binding positions include Ser-10 to Val-15 and Thr-78 to Tyr-80. Trp-12 provides a ligand contact to NAD(+). Trp-98 contacts substrate. Residues Ser-113–Gly-119 and His-134 each bind FMN.

It belongs to the WrbA family. The cofactor is FMN.

The catalysed reaction is a quinone + NADH + H(+) = a quinol + NAD(+). The enzyme catalyses a quinone + NADPH + H(+) = a quinol + NADP(+). The polypeptide is NAD(P)H dehydrogenase (quinone) (Methylorubrum extorquens (strain CM4 / NCIMB 13688) (Methylobacterium extorquens)).